Reading from the N-terminus, the 382-residue chain is PPE family protein PPE44 (382 aa).

The protein belongs to the mycobacterial PPE family.

Its subcellular location is the secreted. It is found in the cell wall. The protein localises to the cell surface. Virulence factor that modulates host innate immune response. This chain is PPE family protein PPE44, found in Mycobacterium tuberculosis (strain CDC 1551 / Oshkosh).